The chain runs to 1033 residues: Phospholipid-transporting ATPase neo1 (1033 aa).

4 helical membrane passes run 133 to 153 (LKIG…LITL), 274 to 294 (TLWA…VYTG), 317 to 337 (INFY…GLTF), and 344 to 364 (DWYI…PINL). D408 functions as the 4-aspartylphosphate intermediate in the catalytic mechanism. Residues D408, K409, T410, E491, F528, S530, K533, K551, R580, T581, T662, G663, D664, R744, and K750 each contribute to the ATP site. D408 provides a ligand contact to Mg(2+). T410 provides a ligand contact to Mg(2+). Transmembrane regions (helical) follow at residues 768–788 (IGDG…IGIV), 843–863 (VVYS…LLLV), 913–933 (VLIS…LIGF), 939–959 (MLAV…ALQI), 965–985 (TIVM…PFLT), and 992–1012 (FLLG…SLLP). D770 provides a ligand contact to Mg(2+). ATP-binding residues include N773 and D774. D774 provides a ligand contact to Mg(2+).

This sequence belongs to the cation transport ATPase (P-type) (TC 3.A.3) family. Type IV subfamily. As to quaternary structure, functions without a CDC50/LEM3 family accessory subunit. It depends on Mg(2+) as a cofactor.

The protein resides in the endosome membrane. It is found in the golgi apparatus membrane. It catalyses the reaction ATP + H2O + phospholipidSide 1 = ADP + phosphate + phospholipidSide 2.. The catalysed reaction is a 1,2-diacyl-sn-glycero-3-phospho-L-serine(out) + ATP + H2O = a 1,2-diacyl-sn-glycero-3-phospho-L-serine(in) + ADP + phosphate + H(+). The enzyme catalyses a 1,2-diacyl-sn-glycero-3-phosphoethanolamine(out) + ATP + H2O = a 1,2-diacyl-sn-glycero-3-phosphoethanolamine(in) + ADP + phosphate + H(+). In terms of biological role, flippase that catalyzes the hydrolysis of ATP coupled to the transport of lysophosphatidylserine, phosphatidylethanolamine, and phosphatidylserine from the lumenal to the cytosolic leaflet of the Golgi apparatus membrane and ensures the maintenance of asymmetric distribution of phospholipids. This is Phospholipid-transporting ATPase neo1 from Schizosaccharomyces pombe (strain 972 / ATCC 24843) (Fission yeast).